The sequence spans 172 residues: Large ribosomal subunit protein uL10 (172 aa).

It belongs to the universal ribosomal protein uL10 family. In terms of assembly, part of the ribosomal stalk of the 50S ribosomal subunit. The N-terminus interacts with L11 and the large rRNA to form the base of the stalk. The C-terminus forms an elongated spine to which L12 dimers bind in a sequential fashion forming a multimeric L10(L12)X complex.

Functionally, forms part of the ribosomal stalk, playing a central role in the interaction of the ribosome with GTP-bound translation factors. The sequence is that of Large ribosomal subunit protein uL10 from Rhodopseudomonas palustris (strain HaA2).